Consider the following 463-residue polypeptide: Glutamyl-tRNA reductase (463 aa).

Residues 49–52 (TCNR), Ser109, 114–116 (EQQ), and Gln120 contribute to the substrate site. Residue Cys50 is the Nucleophile of the active site. Residue 196 to 201 (GAGAMS) coordinates NADP(+).

This sequence belongs to the glutamyl-tRNA reductase family. Homodimer.

It carries out the reaction (S)-4-amino-5-oxopentanoate + tRNA(Glu) + NADP(+) = L-glutamyl-tRNA(Glu) + NADPH + H(+). It participates in porphyrin-containing compound metabolism; protoporphyrin-IX biosynthesis; 5-aminolevulinate from L-glutamyl-tRNA(Glu): step 1/2. Its function is as follows. Catalyzes the NADPH-dependent reduction of glutamyl-tRNA(Glu) to glutamate 1-semialdehyde (GSA). This Corynebacterium glutamicum (strain R) protein is Glutamyl-tRNA reductase.